The sequence spans 46 residues: Aspartate aminotransferase 1 (46 aa).

It belongs to the class-I pyridoxal-phosphate-dependent aminotransferase family. As to quaternary structure, homodimer. Pyridoxal 5'-phosphate serves as cofactor.

It catalyses the reaction L-aspartate + 2-oxoglutarate = oxaloacetate + L-glutamate. Its function is as follows. Important for the metabolism of amino acids and Krebs-cycle related organic acids. In plants, it is involved in nitrogen metabolism and in aspects of carbon and energy metabolism. This chain is Aspartate aminotransferase 1, found in Pseudotsuga menziesii (Douglas-fir).